Reading from the N-terminus, the 171-residue chain is Ribosome maturation factor RimM (171 aa).

In terms of domain architecture, PRC barrel spans 97 to 170 (EGEYYYHEII…LVTIHVMEGL (74 aa)).

Belongs to the RimM family. Binds ribosomal protein uS19.

The protein resides in the cytoplasm. Its function is as follows. An accessory protein needed during the final step in the assembly of 30S ribosomal subunit, possibly for assembly of the head region. Essential for efficient processing of 16S rRNA. May be needed both before and after RbfA during the maturation of 16S rRNA. It has affinity for free ribosomal 30S subunits but not for 70S ribosomes. In Bacillus cereus (strain ZK / E33L), this protein is Ribosome maturation factor RimM.